The chain runs to 195 residues: Imidazoleglycerol-phosphate dehydratase (195 aa).

This sequence belongs to the imidazoleglycerol-phosphate dehydratase family.

The protein resides in the cytoplasm. The enzyme catalyses D-erythro-1-(imidazol-4-yl)glycerol 3-phosphate = 3-(imidazol-4-yl)-2-oxopropyl phosphate + H2O. It participates in amino-acid biosynthesis; L-histidine biosynthesis; L-histidine from 5-phospho-alpha-D-ribose 1-diphosphate: step 6/9. The polypeptide is Imidazoleglycerol-phosphate dehydratase (Beijerinckia indica subsp. indica (strain ATCC 9039 / DSM 1715 / NCIMB 8712)).